We begin with the raw amino-acid sequence, 315 residues long: Cytosolic Fe-S cluster assembly factor nubp1-A (315 aa).

Positions 1-23 (MADIPDNAPQHCPGTDSTEAGKS) are disordered. Positions 12, 26, 29, and 35 each coordinate [4Fe-4S] cluster. 66 to 73 (GKGGVGKS) serves as a coordination point for ATP. Cysteine 239 and cysteine 242 together coordinate [4Fe-4S] cluster.

It belongs to the Mrp/NBP35 ATP-binding proteins family. NUBP1/NBP35 subfamily. As to quaternary structure, heterotetramer of 2 nubp1 and 2 nubp2 chains. It depends on [4Fe-4S] cluster as a cofactor.

The protein localises to the cytoplasm. Functionally, component of the cytosolic iron-sulfur (Fe/S) protein assembly (CIA) machinery. Required for maturation of extramitochondrial Fe-S proteins. The nubp1-nubp2 heterotetramer forms a Fe-S scaffold complex, mediating the de novo assembly of an Fe-S cluster and its transfer to target apoproteins. This is Cytosolic Fe-S cluster assembly factor nubp1-A (nubp1-A) from Xenopus laevis (African clawed frog).